A 399-amino-acid polypeptide reads, in one-letter code: Centrosomal protein 43 (399 aa).

The 33-residue stretch at 70-102 (DGRLVASLVAEFLQFFNLDFTLAVFQPETSTLQ) folds into the LisH domain. Disordered stretches follow at residues 139–218 (EKGP…SSLH) and 232–308 (NRTL…SESK). A Phosphothreonine modification is found at Thr-143. A phosphoserine mark is found at Ser-152, Ser-156, and Ser-160. Polar residues predominate over residues 163–172 (GKTSAQTTPS). Position 170 is a phosphothreonine (Thr-170). The segment covering 175 to 186 (PRYKGQGKKKTS) has biased composition (basic residues). Position 202 is a phosphoserine (Ser-202). Residues 205-218 (SVSLSEPKSKSSLH) show a composition bias toward low complexity. Thr-234 carries the post-translational modification Phosphothreonine. The segment covering 245-256 (PDEDDMEGDSFF) has biased composition (acidic residues). A compositionally biased stretch (basic and acidic residues) spans 259-275 (PIPKPEKTYGLRKEPRK). The segment covering 286-302 (APPLKSGLSSLAGAPSL) has biased composition (low complexity). Phosphoserine occurs at positions 301 and 326. Positions 331 to 353 (TGEDDDYVDDFNSTSHRSEKSEI) are disordered. The residue at position 337 (Tyr-337) is a Phosphotyrosine.

It belongs to the CEP43 family. Homodimer. Part of a ternary complex that contains CEP350, CEP43 and MAPRE1. Interacts directly with CEP350 and MAPRE1. Interacts with CEP19. Interacts (via N-terminus) with CEP350 (via C-terminus). In terms of tissue distribution, ubiquitous. Highly expressed in heart, liver, muscle, kidney, intestine, colon, adrenal gland, prostate, testis, and pancreas.

Its subcellular location is the cytoplasm. It is found in the cytoskeleton. The protein localises to the microtubule organizing center. The protein resides in the centrosome. It localises to the centriole. Its subcellular location is the cilium basal body. Its function is as follows. Required for anchoring microtubules to the centrosomes. Required for ciliation. The protein is Centrosomal protein 43 of Homo sapiens (Human).